A 91-amino-acid polypeptide reads, in one-letter code: UPF0512 protein F (91 aa).

It belongs to the UPF0512 family.

This chain is UPF0512 protein F, found in Dictyostelium discoideum (Social amoeba).